The following is a 156-amino-acid chain: Small ribosomal subunit protein uS7 (156 aa).

It belongs to the universal ribosomal protein uS7 family. As to quaternary structure, part of the 30S ribosomal subunit. Contacts proteins S9 and S11.

In terms of biological role, one of the primary rRNA binding proteins, it binds directly to 16S rRNA where it nucleates assembly of the head domain of the 30S subunit. Is located at the subunit interface close to the decoding center, probably blocks exit of the E-site tRNA. The sequence is that of Small ribosomal subunit protein uS7 from Moorella thermoacetica (strain ATCC 39073 / JCM 9320).